The following is a 110-amino-acid chain: uncharacterized protein (110 aa).

This is an uncharacterized protein from Yersinia enterocolitica.